A 320-amino-acid chain; its full sequence is ATP-dependent 6-phosphofructokinase (320 aa).

G12 provides a ligand contact to ATP. ADP-binding positions include 22–26 and 55–60; these read RGVVR and RYSVSD. Residues 73-74 and 103-106 contribute to the ATP site; these read RF and GDGS. D104 is a Mg(2+) binding site. 126–128 provides a ligand contact to substrate; the sequence is TID. D128 (proton acceptor) is an active-site residue. Residue R155 coordinates ADP. Residues R163 and 170–172 each bind substrate; that span reads MGR. ADP contacts are provided by residues 186-188, K212, and 214-216; these read GCE and KKH. Substrate is bound by residues E223, R244, and 250–253; that span reads HIQR.

This sequence belongs to the phosphofructokinase type A (PFKA) family. ATP-dependent PFK group I subfamily. Prokaryotic clade 'B1' sub-subfamily. In terms of assembly, homotetramer. The cofactor is Mg(2+).

It is found in the cytoplasm. The catalysed reaction is beta-D-fructose 6-phosphate + ATP = beta-D-fructose 1,6-bisphosphate + ADP + H(+). The protein operates within carbohydrate degradation; glycolysis; D-glyceraldehyde 3-phosphate and glycerone phosphate from D-glucose: step 3/4. Allosterically activated by ADP and other diphosphonucleosides, and allosterically inhibited by phosphoenolpyruvate. In terms of biological role, catalyzes the phosphorylation of D-fructose 6-phosphate to fructose 1,6-bisphosphate by ATP, the first committing step of glycolysis. The protein is ATP-dependent 6-phosphofructokinase of Enterobacter cloacae.